The primary structure comprises 195 residues: Imidazole glycerol phosphate synthase subunit HisH (195 aa).

One can recognise a Glutamine amidotransferase type-1 domain in the interval 1–193 (MIAIVDYGVG…RETTCNSTQQ (193 aa)). Catalysis depends on C78, which acts as the Nucleophile. Active-site residues include H168 and E170.

Heterodimer of HisH and HisF.

The protein localises to the cytoplasm. It carries out the reaction 5-[(5-phospho-1-deoxy-D-ribulos-1-ylimino)methylamino]-1-(5-phospho-beta-D-ribosyl)imidazole-4-carboxamide + L-glutamine = D-erythro-1-(imidazol-4-yl)glycerol 3-phosphate + 5-amino-1-(5-phospho-beta-D-ribosyl)imidazole-4-carboxamide + L-glutamate + H(+). It catalyses the reaction L-glutamine + H2O = L-glutamate + NH4(+). It participates in amino-acid biosynthesis; L-histidine biosynthesis; L-histidine from 5-phospho-alpha-D-ribose 1-diphosphate: step 5/9. Functionally, IGPS catalyzes the conversion of PRFAR and glutamine to IGP, AICAR and glutamate. The HisH subunit catalyzes the hydrolysis of glutamine to glutamate and ammonia as part of the synthesis of IGP and AICAR. The resulting ammonia molecule is channeled to the active site of HisF. The protein is Imidazole glycerol phosphate synthase subunit HisH of Exiguobacterium sibiricum (strain DSM 17290 / CCUG 55495 / CIP 109462 / JCM 13490 / 255-15).